Consider the following 260-residue polypeptide: Thrombin-like enzyme gloshedobin (260 aa).

An N-terminal signal peptide occupies residues 1 to 18; it reads MVLIRVQANLLILQLSYA. Positions 19 to 24 are excised as a propeptide; the sequence is QKSSEL. The 228-residue stretch at 25 to 252 folds into the Peptidase S1 domain; it reads IIGGDECNIN…TEWIQSIIAG (228 aa). Intrachain disulfides connect Cys-31-Cys-165, Cys-52-Cys-68, Cys-100-Cys-258, Cys-144-Cys-212, Cys-176-Cys-191, and Cys-202-Cys-227. Catalysis depends on charge relay system residues His-67 and Asp-112. 2 N-linked (GlcNAc...) asparagine glycosylation sites follow: Asn-123 and Asn-124. Catalysis depends on Ser-206, which acts as the Charge relay system.

The protein belongs to the peptidase S1 family. Snake venom subfamily. As to quaternary structure, monomer. In terms of tissue distribution, expressed by the venom gland.

It localises to the secreted. With respect to regulation, completely inhibited by PMSF, and N-tosyl-Lphenylalanine chloromethyl ketone (TPCK) and poorly inhibited by benzamidine and derivates. Not inhibited by EDTA, heparin and hirudin. In terms of biological role, thrombin-like snake venom serine protease. The recombinant form clots fibrinogen by cleaving fibrinogen Aalpha chain (FGA), and slowly Bbeta chain (FGB). Has amidolytic activities. In Gloydius shedaoensis (Shedao island pit viper), this protein is Thrombin-like enzyme gloshedobin.